A 1420-amino-acid polypeptide reads, in one-letter code: DNA-directed RNA polymerase subunit beta' (1420 aa).

Cysteine 70, cysteine 72, cysteine 85, and cysteine 88 together coordinate Zn(2+). 3 residues coordinate Mg(2+): aspartate 464, aspartate 466, and aspartate 468. Residues cysteine 823, cysteine 897, cysteine 904, and cysteine 907 each contribute to the Zn(2+) site.

This sequence belongs to the RNA polymerase beta' chain family. The RNAP catalytic core consists of 2 alpha, 1 beta, 1 beta' and 1 omega subunit. When a sigma factor is associated with the core the holoenzyme is formed, which can initiate transcription. Mg(2+) is required as a cofactor. The cofactor is Zn(2+).

The enzyme catalyses RNA(n) + a ribonucleoside 5'-triphosphate = RNA(n+1) + diphosphate. In terms of biological role, DNA-dependent RNA polymerase catalyzes the transcription of DNA into RNA using the four ribonucleoside triphosphates as substrates. The protein is DNA-directed RNA polymerase subunit beta' of Polynucleobacter asymbioticus (strain DSM 18221 / CIP 109841 / QLW-P1DMWA-1) (Polynucleobacter necessarius subsp. asymbioticus).